A 358-amino-acid chain; its full sequence is MDKTSAYQGLFFGALYTLAVGLKHAPILMIESAKQNAWHSYILGVVIVIPALWLMHRLMKKHQDKNIYELLSDSSPIAGRIIILLFSLYFLLINAHDIRFFINLINILFLPRTPMAVLGGVIIFVAICIAREGKETLTRMAQIFLFPFGILVLFLPFTLATQIELQNLTPVFEGLIPYLQSGYYAFGTMGELIILPLLFSNRSVPLKYTIFAILLGALLLAVMLFSSISVFGPNLTSTFFDPAYMVIRQIRITDFLDRSDLIIAAFWIPVIMVKIAGSLYIVVYGLSFLHSKIDPKAMYTPTGMFSVVCGFWFFLNTNQLIDFNRIKPIINVVISLLLPLLIYLIIKSKALFGAKAKH.

10 consecutive transmembrane segments (helical) span residues 10–30 (LFFG…ILMI), 36–56 (NAWH…WLMH), 81–101 (IIIL…IRFF), 107–127 (ILFL…FVAI), 143–163 (IFLF…ATQI), 179–199 (LQSG…PLLF), 210–230 (IFAI…SISV), 262–282 (IIAA…LYIV), 297–317 (AMYT…FLNT), and 326–346 (IKPI…YLII).

It belongs to the amino acid-polyamine-organocation (APC) superfamily. Spore germination protein (SGP) (TC 2.A.3.9) family.

It is found in the cell membrane. Its function is as follows. May be involved in spore germination. The sequence is that of Putative spore germination protein YfkT (yfkT) from Bacillus subtilis (strain 168).